Consider the following 344-residue polypeptide: Succinylglutamate desuccinylase (344 aa).

Positions 63, 66, and 160 each coordinate Zn(2+). The active site involves Glu-224.

Belongs to the AspA/AstE family. Succinylglutamate desuccinylase subfamily. Requires Zn(2+) as cofactor.

The enzyme catalyses N-succinyl-L-glutamate + H2O = L-glutamate + succinate. Its pathway is amino-acid degradation; L-arginine degradation via AST pathway; L-glutamate and succinate from L-arginine: step 5/5. Transforms N(2)-succinylglutamate into succinate and glutamate. This chain is Succinylglutamate desuccinylase, found in Shewanella sp. (strain MR-7).